The sequence spans 240 residues: UDP-2,3-diacylglucosamine hydrolase (240 aa).

The Mn(2+) site is built by aspartate 8, histidine 10, aspartate 41, asparagine 79, and histidine 114. 79–80 (NR) serves as a coordination point for substrate. Residues aspartate 122, serine 160, asparagine 164, lysine 167, and histidine 195 each coordinate substrate. Positions 195 and 197 each coordinate Mn(2+).

This sequence belongs to the LpxH family. Requires Mn(2+) as cofactor.

It localises to the cell inner membrane. It catalyses the reaction UDP-2-N,3-O-bis[(3R)-3-hydroxytetradecanoyl]-alpha-D-glucosamine + H2O = 2-N,3-O-bis[(3R)-3-hydroxytetradecanoyl]-alpha-D-glucosaminyl 1-phosphate + UMP + 2 H(+). It functions in the pathway glycolipid biosynthesis; lipid IV(A) biosynthesis; lipid IV(A) from (3R)-3-hydroxytetradecanoyl-[acyl-carrier-protein] and UDP-N-acetyl-alpha-D-glucosamine: step 4/6. Its function is as follows. Hydrolyzes the pyrophosphate bond of UDP-2,3-diacylglucosamine to yield 2,3-diacylglucosamine 1-phosphate (lipid X) and UMP by catalyzing the attack of water at the alpha-P atom. Involved in the biosynthesis of lipid A, a phosphorylated glycolipid that anchors the lipopolysaccharide to the outer membrane of the cell. The polypeptide is UDP-2,3-diacylglucosamine hydrolase (Escherichia coli O6:H1 (strain CFT073 / ATCC 700928 / UPEC)).